Consider the following 578-residue polypeptide: Nuclear receptor subfamily 1 group D member 2 (578 aa).

A required for phosphorylation by CSNK1E and cytoplasmic localization region spans residues 1–60; sequence MELNAGGVIAYISSSSSASSPASCHSEGSENSFQSSSSSVPSSPNSSNCDANGNPKNTDV. A modulating region spans residues 1-99; sequence MELNAGGVIA…HSGMTKFSGM (99 aa). The span at 13 to 47 shows a compositional bias: low complexity; sequence SSSSSASSPASCHSEGSENSFQSSSSSVPSSPNSS. Residues 13 to 89 form a disordered region; sequence SSSSSASSPA…KPGAPGMTKS (77 aa). The residue at position 46 (S46) is a Phosphoserine; by GSK3-beta. Over residues 48-61 the composition is skewed to polar residues; it reads NCDANGNPKNTDVS. Residues 100–176 constitute a DNA-binding region (nuclear receptor); that stretch reads VLLCKVCGDV…VGMSRDAVRF (77 aa). 2 NR C4-type zinc fingers span residues 103 to 123 and 140 to 164; these read CKVC…CEGC and CLKN…FKKC. Residues K162 and K163 each carry the N6-acetyllysine; by KAT5 modification. The tract at residues 214 to 247 is disordered; that stretch reads EPHEQSVPPAQEQLRPKPQLEQENIKSTPPPSDF. The segment covering 227–237 has biased composition (basic and acidic residues); it reads LRPKPQLEQEN. 2 cysteine pairs are disulfide-bonded: C336–C342 and C373–C383. The region spanning 368 to 578 is the NR LBD domain; sequence RNSYLCSTGG…EELLAFKVHP (211 aa). Heme is bound by residues C383 and H567. The segment at 396 to 578 is interaction with ZNHIT1; sequence SGHEIWEEFS…EELLAFKVHP (183 aa).

It belongs to the nuclear hormone receptor family. NR1 subfamily. In terms of assembly, binds DNA as a monomer or a homodimer. Interacts with NCOA5 coactivator, leading to a strong increase of transcription of target genes. Interacts (via N-terminus) with KAT5. Interacts (via C-terminus) with HDAC1. Interacts with ZNHIT1. Interacts with SIAH2. Post-translationally, deacetylated by HDAC1. Acetylation and deacetylation regulate its transcriptional regulatory activity. Under more reducing intracellular redox conditions, Cys-383 is in its heme-bound state, which is optimal for recruitment of the NCOR1/HDAC3 corepressor complex and repression of target genes. When subjected to oxidative stress conditions, Cys-383 undergoes oxidation to form a disulfide bridge with Cys-373, also triggering a ligand switch that results in release of bound heme and derepression of target genes. In terms of processing, ubiquitinated by SIAH2; leading to its proteasomal degradation. Post-translationally, phosphorylated by CSNK1E; phosphorylation enhances its cytoplasmic localization.

Its subcellular location is the nucleus. It is found in the cytoplasm. The heme-bound form can bind gaseous signaling molecules such as CO and nitric oxide (NO) and NO can reverse its transcriptional repressor activity. Functionally, transcriptional repressor which coordinates circadian rhythm and metabolic pathways in a heme-dependent manner. Integral component of the complex transcription machinery that governs circadian rhythmicity and forms a critical negative limb of the circadian clock by directly repressing the expression of core clock components BMAL1 and CLOCK. Also regulates genes involved in metabolic functions, including lipid metabolism and the inflammatory response. Acts as a receptor for heme which stimulates its interaction with the NCOR1/HDAC3 corepressor complex, enhancing transcriptional repression. Recognizes two classes of DNA response elements within the promoter of its target genes and can bind to DNA as either monomers or homodimers, depending on the nature of the response element. Binds as a monomer to a response element composed of the consensus half-site motif 5'-[A/G]GGTCA-3' preceded by an A/T-rich 5' sequence (RevRE), or as a homodimer to a direct repeat of the core motif spaced by two nuclegotides (RevDR-2). Acts as a potent competitive repressor of ROR alpha (RORA) function and also negatively regulates the expression of NR1D1. Regulates lipid and energy homeostasis in the skeletal muscle via repression of genes involved in lipid metabolism and myogenesis including: CD36, FABP3, FABP4, UCP3, SCD1 and MSTN. Regulates hepatic lipid metabolism via the repression of APOC3. Represses gene expression at a distance in macrophages by inhibiting the transcription of enhancer-derived RNAs (eRNAs). In addition to its activity as a repressor, can also act as a transcriptional activator. Acts as a transcriptional activator of the sterol regulatory element-binding protein 1 (SREBF1) and the inflammatory mediator interleukin-6 (IL6) in the skeletal muscle. Plays a role in the regulation of circadian sleep/wake cycle; essential for maintaining wakefulness during the dark phase or active period. Key regulator of skeletal muscle mitochondrial function; negatively regulates the skeletal muscle expression of core clock genes and genes involved in mitochondrial biogenesis, fatty acid beta-oxidation and lipid metabolism. May play a role in the circadian control of neutrophilic inflammation in the lung. This Rattus norvegicus (Rat) protein is Nuclear receptor subfamily 1 group D member 2.